A 457-amino-acid chain; its full sequence is NADP-specific glutamate dehydrogenase (457 aa).

K111 is a catalytic residue.

This sequence belongs to the Glu/Leu/Phe/Val dehydrogenases family. In terms of assembly, homohexamer.

It catalyses the reaction L-glutamate + NADP(+) + H2O = 2-oxoglutarate + NH4(+) + NADPH + H(+). This is NADP-specific glutamate dehydrogenase (gdhA) from Agaricus bisporus (White button mushroom).